Here is a 342-residue protein sequence, read N- to C-terminus: L-threonine 3-dehydrogenase (342 aa).

Cys-38 contributes to the Zn(2+) binding site. Active-site charge relay system residues include Thr-40 and His-43. The Zn(2+) site is built by His-63, Glu-64, Cys-93, Cys-96, Cys-99, and Cys-107. NAD(+) contacts are provided by residues Ile-175, Asp-195, Arg-200, 262–264, and 286–287; these read LGI and IY.

Belongs to the zinc-containing alcohol dehydrogenase family. In terms of assembly, homotetramer. It depends on Zn(2+) as a cofactor.

It is found in the cytoplasm. It carries out the reaction L-threonine + NAD(+) = (2S)-2-amino-3-oxobutanoate + NADH + H(+). Its pathway is amino-acid degradation; L-threonine degradation via oxydo-reductase pathway; glycine from L-threonine: step 1/2. Functionally, catalyzes the NAD(+)-dependent oxidation of L-threonine to 2-amino-3-ketobutyrate. This is L-threonine 3-dehydrogenase from Burkholderia lata (strain ATCC 17760 / DSM 23089 / LMG 22485 / NCIMB 9086 / R18194 / 383).